Here is a 355-residue protein sequence, read N- to C-terminus: Proto-oncogene Wnt-3 (355 aa).

The signal sequence occupies residues 1–21; the sequence is MEPHLLGLLLGLLLGGTRVLA. 11 disulfide bridges follow: C80–C91, C131–C139, C141–C158, C206–C220, C208–C215, C284–C315, C300–C310, C314–C354, C330–C345, C332–C342, and C337–C338. N90 carries an N-linked (GlcNAc...) asparagine glycan. A lipid anchor (O-palmitoleoyl serine; by PORCN) is attached at S212. An N-linked (GlcNAc...) asparagine glycan is attached at N301.

The protein belongs to the Wnt family. As to quaternary structure, forms a soluble 1:1 complex with AFM; this prevents oligomerization and is required for prolonged biological activity. The complex with AFM may represent the physiological form in body fluids. Interacts with PORCN. Interacts with WLS. Palmitoleoylation is required for efficient binding to frizzled receptors. Depalmitoleoylation leads to Wnt signaling pathway inhibition.

The protein localises to the secreted. It localises to the extracellular space. The protein resides in the extracellular matrix. Ligand for members of the frizzled family of seven transmembrane receptors. Functions in the canonical Wnt signaling pathway that results in activation of transcription factors of the TCF/LEF family. Required for normal gastrulation, formation of the primitive streak, and for the formation of the mesoderm during early embryogenesis. Required for normal formation of the apical ectodermal ridge. Required for normal embryonic development, and especially for limb development. The sequence is that of Proto-oncogene Wnt-3 (WNT3) from Homo sapiens (Human).